The primary structure comprises 412 residues: Imidazolonepropionase (412 aa).

Positions 76 and 78 each coordinate Fe(3+). Residues His76 and His78 each contribute to the Zn(2+) site. 4-imidazolone-5-propanoate-binding residues include Arg85, Tyr148, and His181. Tyr148 is an N-formimidoyl-L-glutamate binding site. Position 242 (His242) interacts with Fe(3+). His242 contributes to the Zn(2+) binding site. Position 245 (Glu245) interacts with 4-imidazolone-5-propanoate. Asp317 is a binding site for Fe(3+). Position 317 (Asp317) interacts with Zn(2+). The N-formimidoyl-L-glutamate site is built by Asn319 and Gly321. A 4-imidazolone-5-propanoate-binding site is contributed by Ser322.

It belongs to the metallo-dependent hydrolases superfamily. HutI family. It depends on Zn(2+) as a cofactor. The cofactor is Fe(3+).

Its subcellular location is the cytoplasm. The catalysed reaction is 4-imidazolone-5-propanoate + H2O = N-formimidoyl-L-glutamate. Its pathway is amino-acid degradation; L-histidine degradation into L-glutamate; N-formimidoyl-L-glutamate from L-histidine: step 3/3. In terms of biological role, catalyzes the hydrolytic cleavage of the carbon-nitrogen bond in imidazolone-5-propanoate to yield N-formimidoyl-L-glutamate. It is the third step in the universal histidine degradation pathway. The chain is Imidazolonepropionase from Staphylococcus aureus (strain MRSA252).